A 74-amino-acid polypeptide reads, in one-letter code: Cytochrome c oxidase assembly factor 5 (74 aa).

The region spanning 27 to 65 (QSACVLQEGKSPRQCLKEGNCRALQYSFFECKRSMLDAR) is the CHCH domain. The short motif at 30 to 41 (CVLQEGKSPRQC) is the Cx10C motif element. 2 cysteine pairs are disulfide-bonded: Cys-30–Cys-57 and Cys-41–Cys-47. Ser-37 carries the phosphoserine modification. The short motif at 47-57 (CRALQYSFFEC) is the Cx9C motif element.

Belongs to the PET191 family.

In terms of biological role, involved in an early step of the mitochondrial complex IV assembly process. The protein is Cytochrome c oxidase assembly factor 5 (Coa5) of Mus musculus (Mouse).